We begin with the raw amino-acid sequence, 392 residues long: Phosphoglycerate kinase (392 aa).

Substrate is bound by residues 21–23 (DFN), arginine 36, 59–62 (HLGR), arginine 118, and arginine 151. Residues lysine 202, glutamate 321, and 347 to 350 (GGDS) each bind ATP.

Belongs to the phosphoglycerate kinase family. As to quaternary structure, monomer.

It is found in the cytoplasm. It carries out the reaction (2R)-3-phosphoglycerate + ATP = (2R)-3-phospho-glyceroyl phosphate + ADP. The protein operates within carbohydrate degradation; glycolysis; pyruvate from D-glyceraldehyde 3-phosphate: step 2/5. This Symbiobacterium thermophilum (strain DSM 24528 / JCM 14929 / IAM 14863 / T) protein is Phosphoglycerate kinase.